Reading from the N-terminus, the 122-residue chain is Large ribosomal subunit protein eL34 (122 aa).

The protein belongs to the eukaryotic ribosomal protein eL34 family. As to quaternary structure, component of the large ribosomal subunit. Mature ribosomes consist of a small (40S) and a large (60S) subunit. The 40S subunit contains about 32 different proteins and 1 molecule of RNA (18S). The 60S subunit contains 45 different proteins and 3 molecules of RNA (25S, 5.8S and 5S).

It localises to the cytoplasm. Component of the ribosome, a large ribonucleoprotein complex responsible for the synthesis of proteins in the cell. The small ribosomal subunit (SSU) binds messenger RNAs (mRNAs) and translates the encoded message by selecting cognate aminoacyl-transfer RNA (tRNA) molecules. The large subunit (LSU) contains the ribosomal catalytic site termed the peptidyl transferase center (PTC), which catalyzes the formation of peptide bonds, thereby polymerizing the amino acids delivered by tRNAs into a polypeptide chain. The nascent polypeptides leave the ribosome through a tunnel in the LSU and interact with protein factors that function in enzymatic processing, targeting, and the membrane insertion of nascent chains at the exit of the ribosomal tunnel. This is Large ribosomal subunit protein eL34 from Candida albicans (strain SC5314 / ATCC MYA-2876) (Yeast).